A 360-amino-acid polypeptide reads, in one-letter code: tRNA N6-adenosine threonylcarbamoyltransferase (360 aa).

The Fe cation site is built by His111 and His115. Residues 134-138, Asp167, Gly180, Asp184, and Asn279 contribute to the substrate site; that span reads LVSGG. Residue Asp307 participates in Fe cation binding.

This sequence belongs to the KAE1 / TsaD family. Requires Fe(2+) as cofactor.

Its subcellular location is the cytoplasm. It catalyses the reaction L-threonylcarbamoyladenylate + adenosine(37) in tRNA = N(6)-L-threonylcarbamoyladenosine(37) in tRNA + AMP + H(+). In terms of biological role, required for the formation of a threonylcarbamoyl group on adenosine at position 37 (t(6)A37) in tRNAs that read codons beginning with adenine. Is involved in the transfer of the threonylcarbamoyl moiety of threonylcarbamoyl-AMP (TC-AMP) to the N6 group of A37, together with TsaE and TsaB. TsaD likely plays a direct catalytic role in this reaction. The protein is tRNA N6-adenosine threonylcarbamoyltransferase of Acaryochloris marina (strain MBIC 11017).